Here is a 76-residue protein sequence, read N- to C-terminus: uncharacterized protein (76 aa).

The protein resides in the host cytoplasm. This is an uncharacterized protein from Escherichia phage Mu (Bacteriophage Mu).